Reading from the N-terminus, the 189-residue chain is Putative OVARIAN TUMOR DOMAIN-containing deubiquitinating enzyme 8 (189 aa).

The OTU domain maps to 1-103; the sequence is MMKSDGNCQF…GIHFNSIYKK (103 aa). The active site involves Asp-5. Residue Cys-8 is the Nucleophile of the active site. His-96 is a catalytic residue. Positions 105-189 are disordered; sequence KEKGSRSSSS…NRNHHFHYSE (85 aa). The stretch at 120–181 forms a coiled coil; the sequence is WMKLQRKKEN…KKEKKEKKNR (62 aa). 2 short sequence motifs (nuclear localization signal) span residues 125–132 and 163–170; these read RKKENEAK and KKKAKVQK. Residues 126-174 are compositionally biased toward basic and acidic residues; that stretch reads KKENEAKKKEEEEKERKDMEKEEKKKDKEDKKKDKEDKKKAKVQKEKKE. Residues 175–189 show a composition bias toward basic residues; that stretch reads KKEKKNRNHHFHYSE.

This sequence belongs to the peptidase C85 family.

Its subcellular location is the nucleus. The enzyme catalyses Thiol-dependent hydrolysis of ester, thioester, amide, peptide and isopeptide bonds formed by the C-terminal Gly of ubiquitin (a 76-residue protein attached to proteins as an intracellular targeting signal).. Functionally, hydrolase that can remove conjugated ubiquitin from proteins in vitro and may therefore play an important regulatory role at the level of protein turnover by preventing degradation. The protein is Putative OVARIAN TUMOR DOMAIN-containing deubiquitinating enzyme 8 of Arabidopsis thaliana (Mouse-ear cress).